Consider the following 431-residue polypeptide: uncharacterized protein (431 aa).

A run of 4 helical transmembrane segments spans residues 228–248 (GLLSIPLTSSIIIYGFIHYLS), 279–299 (IGLPKIILYSNLATFCYNFTF), 349–369 (ILWPFVGKCTGGLLLNAFLWI), and 388–408 (MIFNIIGCGTAAIGWSSLKLY).

It localises to the membrane. This is an uncharacterized protein from Saccharomyces cerevisiae (strain ATCC 204508 / S288c) (Baker's yeast).